The chain runs to 1253 residues: Myosin-1 (1253 aa).

Positions 1–40 (MGHSRRPVGGEKKSRGFGRSKAAADVGDGRQAGKPQVKKA) are disordered. In terms of domain architecture, Myosin motor spans 50–729 (IGVSDLTLLS…TLFALEAMRD (680 aa)). Residue 143-150 (GESGAGKT) participates in ATP binding. A Phosphoserine modification is found at serine 371. The segment at 418–500 (SIGILDIYGF…PGVFAALNDA (83 aa)) is actin-binding. IQ domains are found at residues 733-753 (HNMA…RIEC) and 754-779 (ATRI…QGHQ). Residues 787–977 (RRRMSLLGSR…TIHTGAGEPA (191 aa)) enclose the TH1 domain. Disordered regions lie at residues 959 to 1083 (TGDD…PKKP) and 1139 to 1253 (QVAP…DDDW). The segment covering 1029-1055 (PQPAAAQPAAPQPAARVVPQPVAAVAA) has biased composition (low complexity). 2 stretches are compositionally biased toward pro residues: residues 1068–1081 (APPP…PAPK) and 1143–1155 (APKP…PPAA). Positions 1080–1141 (PKKPTAKALY…PEAYLEEQVA (62 aa)) constitute an SH3 domain. 2 stretches are compositionally biased toward low complexity: residues 1156–1173 (PRST…AKAK) and 1221–1235 (NSAS…LAEA).

This sequence belongs to the TRAFAC class myosin-kinesin ATPase superfamily. Myosin family. In terms of processing, phosphorylation of the TEDS site (Ser-371) is required for the polarization of the actin cytoskeleton. Phosphorylation probably activates the myosin-I ATPase activity.

The protein localises to the cytoplasm. It localises to the cytoskeleton. Its subcellular location is the actin patch. Type-I myosin implicated in the organization of the actin cytoskeleton. Required for proper actin cytoskeleton polarization. At the cell cortex, assembles in patch-like structures together with proteins from the actin-polymerizing machinery and promotes actin assembly. Functions as actin nucleation-promoting factor (NPF) for the Arp2/3 complex. Plays an important role in polarized growth, spore germination, hyphal morphogenesis, and septal wall formation. This Aspergillus clavatus (strain ATCC 1007 / CBS 513.65 / DSM 816 / NCTC 3887 / NRRL 1 / QM 1276 / 107) protein is Myosin-1 (myoA).